The following is a 1848-amino-acid chain: Unconventional myosin-Vb (1848 aa).

Met-1 is modified (N-acetylmethionine). Residues 8–60 form the Myosin N-terminal SH3-like domain; it reads SQCTRVWIPDPDEVWRSAELTKDYKEGDKSLQLRLEDETILEYPIDVQRNQLP. A requires for interaction with LIMA1 region spans residues 21–40; that stretch reads VWRSAELTKDYKEGDKSLQL. One can recognise a Myosin motor domain in the interval 69 to 761; the sequence is VGENDLTALS…QVAYLEKLRA (693 aa). 163–170 lines the ATP pocket; that stretch reads GESGAGKT. Positions 596-630 are disordered; that stretch reads KDPVPATTPGKGSSSKISVRSARPPMKVSNKEHKK. The tract at residues 640–662 is actin-binding; the sequence is LHLLMETLNATTPHYVRCIKPND. 6 consecutive IQ domains span residues 769–798, 792–821, 817–848, 840–869, 865–896, and 888–917; these read IMIQ…QRYC, LTLQ…VLQK, VVLQ…FTRA, VVIQ…TIQK, TTIQ…AFRM, and IVIQ…EHLK. Coiled coils occupy residues 899 to 1266 and 1341 to 1471; these read ARRE…ILRT and RLLE…GMLE. 2 disordered regions span residues 1093–1123 and 1166–1192; these read QTPG…EIGD and QLEK…LDPN. Positions 1101–1121 are enriched in polar residues; that stretch reads PSNQSSLESDSNYPSISTSEI. The segment covering 1166-1179 has biased composition (basic and acidic residues); that stretch reads QLEKREQQDSKKVQ. The residue at position 1446 (Ser-1446) is a Phosphoserine. Residues 1526-1803 form the Dilute domain; it reads TSTINGIKKV…IRTIQAQLQE (278 aa).

The protein belongs to the TRAFAC class myosin-kinesin ATPase superfamily. Myosin family. In terms of assembly, component of the CART complex, at least composed of ACTN4, HGS/HRS, MYO5B and TRIM3. Interacts with RAB11FIP2, RAB11A, and RAB8A. Found in a complex with CFTR and RAB11A. Interacts with NPC1L1;. Interacts with LIMA1.

The protein resides in the cytoplasm. Its function is as follows. May be involved in vesicular trafficking via its association with the CART complex. The CART complex is necessary for efficient transferrin receptor recycling but not for EGFR degradation. Required in a complex with RAB11A and RAB11FIP2 for the transport of NPC1L1 to the plasma membrane. Together with RAB11A participates in CFTR trafficking to the plasma membrane and TF (transferrin) recycling in nonpolarized cells. Together with RAB11A and RAB8A participates in epithelial cell polarization. Together with RAB25 regulates transcytosis. Required for proper localization of bile salt export pump ABCB11 at the apical/canalicular plasma membrane of hepatocytes. In Homo sapiens (Human), this protein is Unconventional myosin-Vb (MYO5B).